Reading from the N-terminus, the 206-residue chain is Small ribosomal subunit protein uS4 (206 aa).

Positions 96 to 156 (QRLDNVVYRM…EKSKTQARII (61 aa)) constitute an S4 RNA-binding domain.

Belongs to the universal ribosomal protein uS4 family. In terms of assembly, part of the 30S ribosomal subunit. Contacts protein S5. The interaction surface between S4 and S5 is involved in control of translational fidelity.

Functionally, one of the primary rRNA binding proteins, it binds directly to 16S rRNA where it nucleates assembly of the body of the 30S subunit. In terms of biological role, with S5 and S12 plays an important role in translational accuracy. This is Small ribosomal subunit protein uS4 from Pseudoalteromonas translucida (strain TAC 125).